Consider the following 1039-residue polypeptide: DIS3-like exonuclease 1 (1039 aa).

The CSD1 domain occupies 221 to 309; it reads PEHLPLEILE…KGRNGALCEN (89 aa). The CSD2 domain maps to 359-425; sequence VLVMPWDYRI…AEIATILVEN (67 aa). The RNB domain occupies 458–807; it reads RLDLRKTHLV…VHRLLLAAVN (350 aa).

It belongs to the RNR ribonuclease family. Component of the RNA exosome complex. Mg(2+) serves as cofactor.

The protein localises to the cytoplasm. It catalyses the reaction Exonucleolytic cleavage in the 3'- to 5'-direction to yield nucleoside 5'-phosphates.. Functionally, catalytic component of the RNA exosome complex which has 3'-&gt;5' exoribonuclease activity and participates in a multitude of cellular RNA processing and degradation events. The polypeptide is DIS3-like exonuclease 1 (dis3l) (Xenopus tropicalis (Western clawed frog)).